Reading from the N-terminus, the 428-residue chain is Putative zinc metalloprotease SAS1196 (428 aa).

Position 21 (His21) interacts with Zn(2+). Glu22 is a catalytic residue. His25 is a Zn(2+) binding site. 4 helical membrane-spanning segments follow: residues Phe172–Ala194, Gly309–Phe331, Ile352–Ile374, and Thr401–Trp420. Residues Ala186–Lys269 form the PDZ domain.

This sequence belongs to the peptidase M50B family. Zn(2+) serves as cofactor.

It is found in the cell membrane. This Staphylococcus aureus (strain MSSA476) protein is Putative zinc metalloprotease SAS1196.